A 409-amino-acid chain; its full sequence is MAAMDADIAPFDTARTDHGLMDRAVEQARAAVGLPVGTRIVAAMSGGVDSTVTAALLAKAGYDVVGVTLQLYDHGAAITKKGACCAGQDILDARMAAERIGIPHYVLDYESRFKEQVIEEFADAYLRGETPIPCVRCNQTVKFRDLLDVARDLGAEAMATGHYVQRSFAAGANRPQLRRAADPAKDQSYFLFATTAEQLDFLRFPLGGMDKPTVRLVAAELGLAIADKPDSQDICFVPEGKYTTVIDRIRPHGALPGDLVHMDGRVLGRHEGVTRYTIGQRRGLNIAVGDPLFVVKIDADKRQVIVGPREALLTQALSLKEGNWLGVEDSLEAAAAAGAPVLARVRSTREPVPGRLTLVPGPNGGEPRLVFDGLEEGVAPGQACVLYDPADPERVLGGGFIVATERAGL.

ATP contacts are provided by residues 43–50 (AMSGGVDS) and leucine 69. Cysteine 137 serves as the catalytic Nucleophile. Cysteine 137 and cysteine 235 are oxidised to a cystine. Glycine 161 provides a ligand contact to ATP. The interaction with tRNA stretch occupies residues 185 to 187 (KDQ). The Cysteine persulfide intermediate role is filled by cysteine 235.

Belongs to the MnmA/TRMU family.

The protein resides in the cytoplasm. It carries out the reaction S-sulfanyl-L-cysteinyl-[protein] + uridine(34) in tRNA + AH2 + ATP = 2-thiouridine(34) in tRNA + L-cysteinyl-[protein] + A + AMP + diphosphate + H(+). Functionally, catalyzes the 2-thiolation of uridine at the wobble position (U34) of tRNA, leading to the formation of s(2)U34. The polypeptide is tRNA-specific 2-thiouridylase MnmA (Caulobacter sp. (strain K31)).